The sequence spans 108 residues: Replication initiation control protein YabA (108 aa).

Positions 83, 85, 99, and 102 each coordinate Zn(2+).

Belongs to the YabA family. As to quaternary structure, homotetramer. Interacts with both DnaA and DnaN, acting as a bridge between these two proteins. Zn(2+) is required as a cofactor.

It localises to the cytoplasm. The protein localises to the nucleoid. Involved in control of chromosome replication initiation. Inhibits the cooperative binding of DnaA to the oriC region, thus negatively regulating initiation of chromosome replication. Inhibits the ability of DnaA-ATP to form a helix on DNA; does not disassemble preformed DnaA-DNA helices. Decreases the residence time of DnaA on the chromosome at its binding sites (oriC, replication forks and promoter-binding sites). Tethers DnaA to the replication machinery via the DNA polymerase beta sliding clamp subunit (dnaN). Associates with oriC and other DnaA targets on the chromosome in a DnaA-dependent manner. The sequence is that of Replication initiation control protein YabA from Lactococcus lactis subsp. cremoris (strain SK11).